The sequence spans 315 residues: Protein TIFY 4B (315 aa).

The disordered stretch occupies residues 113–145; it reads CHRRDSPRSAEFSGSSGQFVADKDSHKTVSVSP. Residues 151–186 form the Tify domain; that stretch reads TNAVVGQMTIFYSGKVNVYDGVPPEKARSIMHFAAN. Residues 233-260 carry the Jas motif; sequence QANRKVSLQRYLEKRKDRRFSKTKKAPG. The Nuclear localization signal signature appears at 235–242; the sequence is NRKVSLQR. Residues 248-257 are compositionally biased toward basic residues; sequence KDRRFSKTKK. The interval 248–315 is disordered; it reads KDRRFSKTKK…LNSDLNSEDN (68 aa). Polar residues predominate over residues 293–315; sequence PENQTKSPNISVDLNSDLNSEDN.

It belongs to the TIFY/JAZ family. As to quaternary structure, interacts with AFPH2/NINJA.

It is found in the nucleus. In terms of biological role, regulates the arrest of dispersed meristematic cells during lamina development. The polypeptide is Protein TIFY 4B (TIFY4B) (Arabidopsis thaliana (Mouse-ear cress)).